A 1889-amino-acid polypeptide reads, in one-letter code: E3 ubiquitin-protein ligase UBR3 (1889 aa).

The tract at residues 1–27 (MAAAAAAAAVGDPQPPQPEAPAQGLAL) is disordered. The UBR-type zinc-finger motif lies at 118–189 (ALCGLVWTAN…ESGFCRRHQI (72 aa)). A disordered region spans residues 338-362 (LGQIDSSDEEDQDGSQGLGKRKRVK). Phosphoserine occurs at positions 343 and 344. Transmembrane regions (helical) follow at residues 761 to 781 (MLEG…HLGM) and 919 to 939 (LLHC…ILMD). Residues 1167-1199 (KKITAAEKKTLDKEERRQKARERQQKLLAEFAS) adopt a coiled-coil conformation. At Ser-1199 the chain carries Phosphoserine. Residues 1306-1364 (DSSCLLAVSIGWEGGVYVQTCGHTLHIDCHKSYMESLRNDQVLQGFSVDKGEFTCPLCR) form an RING-type; degenerate zinc finger. The helical transmembrane segment at 1807–1827 (QNCGAGTGIFLLINASVIIII) threads the bilayer.

This sequence belongs to the E3 ubiquitin-protein ligase UBR1-like family. In terms of assembly, interacts with UBE2A and UBE2B. Expressed in numerous cells of the smell, touch, vision, hearing and taste senses. Expressed in cells of the olfactory pathway, including the olfactory cell layer of the main olfactory epithelium (MOE), a mitral neuron cell layer of the olfactory bulb (OB), and a pyramidal cell layer of the piriform cortex of the olfactory cortex (OC). Expressed in the vomeronasal sensory epithelium of the vomeronasal organ (VNO) and the mitral cells of the accessory olfactory bulb. Expressed in tactile tissues, including the dorsal root ganglion, trigeminal ganglion and follicle-sinus complexes. Expressed in cells between hair follicle and sinus and also in the region of the rete ridge collar. Expressed in taste buds of the fungiform, circumvallate, and foliate papillae. Expressed in the spiral ganglion, the organ of Corti of the cochlea in the inner ear, in the sensory epithelium of macula and vestibular ganglion of the balancing system (at protein level). Expressed in the liver and skeletal muscle.

It localises to the membrane. The enzyme catalyses S-ubiquitinyl-[E2 ubiquitin-conjugating enzyme]-L-cysteine + [acceptor protein]-L-lysine = [E2 ubiquitin-conjugating enzyme]-L-cysteine + N(6)-ubiquitinyl-[acceptor protein]-L-lysine.. The protein operates within protein modification; protein ubiquitination. Its function is as follows. E3 ubiquitin-protein ligase which is a component of the N-end rule pathway. Does not bind to proteins bearing specific N-terminal residues that are destabilizing according to the N-end rule, leading to their ubiquitination and subsequent degradation. May play a role in Shh signaling by mediating the ubiquitination of Kif7. May be important for MYH9 function in certain tissues, possibly by regulating the ubiquitination of MYH9 and consequently affecting its interaction with MYO7A. In Mus musculus (Mouse), this protein is E3 ubiquitin-protein ligase UBR3 (Ubr3).